The chain runs to 249 residues: MTKRLSSKQKVYTQTGINIWGKGPFLWKNNTKDKWKNTPGEHKKKHKLLERYSPMIRGDSINEMNQLGYLIPKSKNEVKISYYEPRYASQLKEKQKLRKFYANVTEKQFYNYYVKAKSFKGKIGDNLIKMLERRLDIIIYRAGFVNSIYQARLLVNHKHVLVNNKIQNISSYLVQNGDMISIKPEIVNLLRNQYNWDILQKSNGSFLKYLPYLEVDYKTMSCIYLYTPEMNEIYFPFQLDMNKVIRYYV.

Residues 133 to 193 form the S4 RNA-binding domain; it reads RRLDIIIYRA…PEIVNLLRNQ (61 aa).

Belongs to the universal ribosomal protein uS4 family.

It localises to the mitochondrion. This Reclinomonas americana protein is Small ribosomal subunit protein uS4m (RPS4).